The following is a 269-amino-acid chain: MSFTKIAALLAVAAASTQLVSAEVGQYEIVEFDAILADVKANLEQYMSLAMNNPDFTLPSGVLDVYQHMTTATDDSYTSYFTEMDFAQITTAMVQVPWYSSRLEPEIIAALQSAGISITSLGQTVSESGSESATASSDASSASESSSAASSSASESSSAASSSASESSSAASSSASESSSAASSSASEAAKSSSSAKSSGSSAASSAASSASSKASSAASSSAKASSSAEKSTNSSSSATSKNAGAAMDMGFFSAGVGAAIAGAAAMLL.

The first 22 residues, 1 to 22, serve as a signal peptide directing secretion; that stretch reads MSFTKIAALLAVAAASTQLVSA. Positions 128–242 are disordered; that stretch reads SGSESATASS…TNSSSSATSK (115 aa). Asn234 carries N-linked (GlcNAc...) asparagine glycosylation. Gly245 carries the GPI-anchor amidated glycine lipid modification. A propeptide spans 246 to 269 (removed in mature form); the sequence is AAMDMGFFSAGVGAAIAGAAAMLL.

Belongs to the SRP1/TIP1 family. In terms of processing, extensively O-glycosylated. The GPI-anchor is attached to the protein in the endoplasmic reticulum and serves to target the protein to the cell surface. There, the glucosamine-inositol phospholipid moiety is cleaved off and the GPI-modified mannoprotein is covalently attached via its lipidless GPI glycan remnant to the 1,6-beta-glucan of the outer cell wall layer.

It is found in the secreted. Its subcellular location is the cell wall. The protein resides in the membrane. Its function is as follows. Component of the cell wall. Required for anaerobic growth. In Saccharomyces cerevisiae (strain ATCC 204508 / S288c) (Baker's yeast), this protein is Cell wall protein TIR3 (TIR3).